The following is a 628-amino-acid chain: Kelch-like protein diablo (628 aa).

Positions 1–56 (MGDLPGSTGGGSGPAAAGNASGNASSAGNTGLGVAGTTGVDRPPSPARLSHTSEKH) are disordered. Positions 14-29 (PAAAGNASGNASSAGN) are enriched in low complexity. The 68-residue stretch at 74–141 (CDVVLNVGGR…CYTAHIIVEE (68 aa)) folds into the BTB domain. Residues 176–278 (CLGIRAFADT…SPKFLVGTVG (103 aa)) enclose the BACK domain. 6 Kelch repeats span residues 325–371 (VLFA…VLND), 373–419 (LYAV…VLDG), 420–466 (FLYA…VLGG), 468–513 (LYAI…VFNN), 515–560 (IYAV…VVNG), and 561–607 (QLYA…VMRA).

The protein operates within protein modification; protein ubiquitination. Functionally, probable substrate-specific adapter of an E3 ubiquitin-protein ligase complex which mediates the ubiquitination and subsequent proteasomal degradation of target proteins. May have a role in synapse differentiation and growth. The protein is Kelch-like protein diablo of Drosophila pseudoobscura pseudoobscura (Fruit fly).